The chain runs to 145 residues: uncharacterized protein (145 aa).

The dksA C4-type zinc-finger motif lies at 86–110 (CERCGEEIPEPRLCAIPWTRYCAKC).

This is an uncharacterized protein from Aquifex aeolicus (strain VF5).